Reading from the N-terminus, the 414-residue chain is Gamma-glutamyl phosphate reductase (414 aa).

Belongs to the gamma-glutamyl phosphate reductase family.

It is found in the cytoplasm. It carries out the reaction L-glutamate 5-semialdehyde + phosphate + NADP(+) = L-glutamyl 5-phosphate + NADPH + H(+). Its pathway is amino-acid biosynthesis; L-proline biosynthesis; L-glutamate 5-semialdehyde from L-glutamate: step 2/2. Catalyzes the NADPH-dependent reduction of L-glutamate 5-phosphate into L-glutamate 5-semialdehyde and phosphate. The product spontaneously undergoes cyclization to form 1-pyrroline-5-carboxylate. The polypeptide is Gamma-glutamyl phosphate reductase (Xanthomonas campestris pv. campestris (strain 8004)).